Consider the following 110-residue polypeptide: MSEATTTTTTTSAPRPGGRPSGPRPDRGPGGPRKKRPFQRRKVCRFCAEKDTTIDYKDPRTLRYFITERGKIVPRRISGNCSKHQREITEAIKRARNLALLPLAAGHALP.

The segment covering 1 to 18 (MSEATTTTTTTSAPRPGG) has biased composition (low complexity). Residues 1–41 (MSEATTTTTTTSAPRPGGRPSGPRPDRGPGGPRKKRPFQRR) form a disordered region. Positions 32 to 41 (PRKKRPFQRR) are enriched in basic residues.

This sequence belongs to the bacterial ribosomal protein bS18 family. In terms of assembly, part of the 30S ribosomal subunit. Forms a tight heterodimer with protein bS6.

Its function is as follows. Binds as a heterodimer with protein bS6 to the central domain of the 16S rRNA, where it helps stabilize the platform of the 30S subunit. The chain is Small ribosomal subunit protein bS18 from Trichlorobacter lovleyi (strain ATCC BAA-1151 / DSM 17278 / SZ) (Geobacter lovleyi).